The sequence spans 503 residues: Glucosaminyl-phosphatidylinositol-acyltransferase PIGW (503 aa).

The Lumenal portion of the chain corresponds to 1 to 21; it reads MSQKQMKEAFVSNQNGTSVLE. An N-linked (GlcNAc...) asparagine glycan is attached at Asn-15. The chain crosses the membrane as a helical span at residues 22–42; it reads ITEGLCLPALCILCRGLLIIL. The Cytoplasmic portion of the chain corresponds to 43-56; sequence SQQLCSSLHNSRTR. Residues 57–75 traverse the membrane as a helical segment; the sequence is FLVDFAFLIVPLVTTLTIF. Residues 76 to 78 are Lumenal-facing; sequence SSF. The helical transmembrane segment at 79–98 threads the bilayer; the sequence is VLLEYLVAIILGAGLLYEIY. Topologically, residues 99 to 131 are cytoplasmic; that stretch reads CRRTCYARMPFQKICEKFLKVSLESEHIPAISC. A helical transmembrane segment spans residues 132 to 152; it reads FRVVNSAFTAVAILAVDFPLF. Over 153 to 160 the chain is Lumenal; the sequence is PRRYAKTE. A helical membrane pass occupies residues 161 to 181; that stretch reads LYGTGAMDYGVGGFIFGSAMV. Residues 182 to 201 lie on the Cytoplasmic side of the membrane; the sequence is SPEVRRKYTKGSRFCYLTKS. The chain crosses the membrane as a helical span at residues 202–222; it reads LYSLWPLVFLGVGRLVAIKSV. The Lumenal portion of the chain corresponds to 223-236; it reads DYQEHLTEYGVHWN. Residues 237–257 form a helical membrane-spanning segment; sequence FFFTLIAVKLITSLLLLICPL. Over 258-259 the chain is Cytoplasmic; sequence NR. A helical membrane pass occupies residues 260–280; sequence SWVVAISIAALYQLALDFTPL. Topologically, residues 281-304 are lumenal; the sequence is KSLILYGTDGSGTRVGLLNANREG. A helical membrane pass occupies residues 305 to 325; sequence IISVLGYVAVHMAGVQTGLYV. Residues 326–337 lie on the Cytoplasmic side of the membrane; the sequence is LKKRSHIKDWIK. Residues 338–358 form a helical membrane-spanning segment; the sequence is VACCILLTAIGLFISLYIVQV. Over 359 to 369 the chain is Lumenal; it reads NVEVASRRMAN. The helical transmembrane segment at 370-390 threads the bilayer; it reads LAFCIWIVASCLILLSSLLLG. Residues 391-447 are Cytoplasmic-facing; the sequence is DIILSFAKFVIKEAAVPCSWKLIQSPTANKKHLESIVFDAKRKEPTLCLITAMNRNQ. A Phosphoserine modification is found at Ser-415. A helical membrane pass occupies residues 448–468; sequence LLFFLLSNVTTGLVNLSIDTL. Residues 469 to 472 lie on the Lumenal side of the membrane; it reads HSST. A helical membrane pass occupies residues 473–493; that stretch reads PWALCLLNLYMFTNCLIIYVL. Topologically, residues 494 to 503 are cytoplasmic; it reads HLQDKTIKFW.

The protein belongs to the PIGW family.

The protein resides in the endoplasmic reticulum membrane. It functions in the pathway glycolipid biosynthesis; glycosylphosphatidylinositol-anchor biosynthesis. In terms of biological role, acyltransferase that catalyzes the acyl transfer from an acyl-CoA at the 2-OH position of the inositol ring of glucosaminyl phosphatidylinositol (GlcN-PI) to generate glucosaminyl acyl phosphatidylinositol (GlcN-(acyl)PI) and participates in the fourth step of GPI-anchor biosynthesis. Required for the transport of GPI-anchored proteins to the plasma membrane. Acetylation during GPI-anchor biosynthesis is not essential for the subsequent mannosylation and is usually removed soon after the attachment of GPIs to proteins. In Bos taurus (Bovine), this protein is Glucosaminyl-phosphatidylinositol-acyltransferase PIGW.